The chain runs to 790 residues: Mitochondrial intermediate peptidase (790 aa).

A mitochondrion-targeting transit peptide spans 1 to 29 (MLKRLARNNSSPWICSRCLQQSQRQRRFN). H570 provides a ligand contact to Zn(2+). E571 is a catalytic residue. 2 residues coordinate Zn(2+): H574 and H577.

It belongs to the peptidase M3 family. The cofactor is Zn(2+).

Its subcellular location is the mitochondrion matrix. The enzyme catalyses Release of an N-terminal octapeptide as second stage of processing of some proteins imported into the mitochondrion.. Cleaves proteins, imported into the mitochondrion, to their mature size. While most mitochondrial precursor proteins are processed to the mature form in one step by mitochondrial processing peptidase (MPP), the sequential cleavage by MIP of an octapeptide after initial processing by MPP is a required step for a subgroup of nuclear-encoded precursor proteins destined for the matrix or the inner membrane. This chain is Mitochondrial intermediate peptidase (OCT1), found in Phaeosphaeria nodorum (strain SN15 / ATCC MYA-4574 / FGSC 10173) (Glume blotch fungus).